The following is a 103-amino-acid chain: Nucleoid-associated protein Adeh_3636 (103 aa).

This sequence belongs to the YbaB/EbfC family. Homodimer.

Its subcellular location is the cytoplasm. The protein localises to the nucleoid. Functionally, binds to DNA and alters its conformation. May be involved in regulation of gene expression, nucleoid organization and DNA protection. In Anaeromyxobacter dehalogenans (strain 2CP-C), this protein is Nucleoid-associated protein Adeh_3636.